A 98-amino-acid polypeptide reads, in one-letter code: MHLARNPALKSIYIKIRKRKTMSIGTALALSAPFAVGLAALGSGLGLGRAVSSAMEAIGRQPEASGKILTTMIIGAALIEALTIYALIVFFVVLEKMA.

Transmembrane regions (helical) follow at residues 27–47 (ALAL…GLGL) and 73–93 (IIGA…FFVV).

The protein belongs to the ATPase C chain family. As to quaternary structure, F-type ATPases have 2 components, F(1) - the catalytic core - and F(0) - the membrane proton channel. F(1) has five subunits: alpha(3), beta(3), gamma(1), delta(1), epsilon(1). F(0) has three main subunits: a(1), b(2) and c(10-14). The alpha and beta chains form an alternating ring which encloses part of the gamma chain. F(1) is attached to F(0) by a central stalk formed by the gamma and epsilon chains, while a peripheral stalk is formed by the delta and b chains.

It localises to the cell inner membrane. In terms of biological role, f(1)F(0) ATP synthase produces ATP from ADP in the presence of a proton or sodium gradient. F-type ATPases consist of two structural domains, F(1) containing the extramembraneous catalytic core and F(0) containing the membrane proton channel, linked together by a central stalk and a peripheral stalk. During catalysis, ATP synthesis in the catalytic domain of F(1) is coupled via a rotary mechanism of the central stalk subunits to proton translocation. Key component of the F(0) channel; it plays a direct role in translocation across the membrane. A homomeric c-ring of between 10-14 subunits forms the central stalk rotor element with the F(1) delta and epsilon subunits. The sequence is that of ATP synthase subunit c from Protochlamydia amoebophila (strain UWE25).